The following is a 708-amino-acid chain: Leukotoxin translocation ATP-binding protein LktB (708 aa).

The region spanning 1 to 126 is the Peptidase C39 domain; it reads MEANHQRNDL…ACYQGQLILV (126 aa). The ABC transmembrane type-1 domain maps to 155-437; that stretch reads FLETLIVSIF…LAQLWQDFQQ (283 aa). 5 helical membrane passes run 159–179, 192–212, 270–290, 296–316, and 389–409; these read LIVSIFLQIFALITPLFFQVV, LNIITVALAIVIIFEIVLSGL, ALTSVLDLLFSFIFFAVMWYY, LVILGSLPCYILWSIFISPIL, and VMVINLWLGAHLVISGDLSIG. The ABC transporter domain maps to 469–704; the sequence is ISFKNIRFRY…SNGLYSYLHQ (236 aa). 503-510 is an ATP binding site; that stretch reads GRSGSGKS.

Belongs to the ABC transporter superfamily. Protein-1 exporter (TC 3.A.1.109) family. As to quaternary structure, homodimer.

The protein resides in the cell inner membrane. It carries out the reaction ATP + H2O + proteinSide 1 = ADP + phosphate + proteinSide 2.. Functionally, part of the ABC transporter complex LktBD involved in leukotoxin export. Transmembrane domains (TMD) form a pore in the inner membrane and the ATP-binding domain (NBD) is responsible for energy generation. The polypeptide is Leukotoxin translocation ATP-binding protein LktB (lktB) (Mannheimia haemolytica (Pasteurella haemolytica)).